The primary structure comprises 353 residues: Mitochondrial glutathione transporter SLC25A40 (353 aa).

Solcar repeat units follow at residues 14-132 (ITPF…LFAL), 140-224 (RSDL…GKWW), and 234-328 (PTVA…GKAF). Helical transmembrane passes span 20–40 (MMASCSGAIITSLLVTPLDVV), 104–124 (LWSGLPPTLIMAVPATVIYFT), 143–163 (LAPLFAGAIARVGSATVISPL), 200–221 (WGPTLLRDVPFSAMYWFNYEKG), 237–257 (AITFTAGALSGSIASIITLPF), and 299–319 (GLFAGFMPRLIKVAPACAIMI).

This sequence belongs to the mitochondrial carrier (TC 2.A.29) family.

It is found in the mitochondrion inner membrane. The catalysed reaction is glutathione(in) = glutathione(out). Probable mitochondrial transporter required for glutathione import into mitochondria. Glutathione, which plays key roles in oxidative metabolism, is produced exclusively in the cytosol and is imported in many organelles. Mitochondrial glutathione is required for the activity and stability of proteins containing iron-sulfur clusters. The polypeptide is Mitochondrial glutathione transporter SLC25A40 (Danio rerio (Zebrafish)).